The primary structure comprises 381 residues: Selenoprotein P (381 aa).

A signal peptide spans 1 to 19 (MWRSLGLALALCLLPSGGT). Asn-46 carries N-linked (GlcNAc...) asparagine glycosylation. Residue Sec-59 is a non-standard amino acid, selenocysteine. N-linked (GlcNAc...) (complex) asparagine glycosylation is present at Asn-83. N-linked (GlcNAc...) asparagine glycosylation is found at Asn-119, Asn-128, and Asn-174. The interval 200–268 (TPSPHYHHEH…ENRDMPASED (69 aa)) is disordered. Residues 204 to 216 (HYHHEHHHNHGHQ) are compositionally biased toward basic residues. Residues 218–230 (LGSSELSENQQPG) are compositionally biased toward polar residues. Over residues 243–255 (LHHHHKHKGQHRQ) the composition is skewed to basic residues. Ser-266 is subject to Phosphoserine. 3 non-standard amino acids (selenocysteine) are found at residues Sec-300, Sec-318, and Sec-330. A glycan (N-linked (GlcNAc...) asparagine) is linked at Asn-338. 6 non-standard amino acids (selenocysteine) are found at residues Sec-345, Sec-352, Sec-367, Sec-369, Sec-376, and Sec-378. A disordered region spans residues 355-381 (SQQLIPTEASASURUKNQAKKUEUPSN).

Belongs to the selenoprotein P family. Post-translationally, phosphorylation sites are present in the extracellular medium. In terms of tissue distribution, made in the liver and heart and secreted into the plasma. It is also found in the kidney.

The protein localises to the secreted. Functionally, might be responsible for some of the extracellular antioxidant defense properties of selenium or might be involved in the transport of selenium. May supply selenium to tissues such as brain and testis. This Homo sapiens (Human) protein is Selenoprotein P.